A 189-amino-acid polypeptide reads, in one-letter code: Crossover junction endodeoxyribonuclease RuvC (189 aa).

Residues aspartate 7, glutamate 68, and aspartate 141 contribute to the active site. 3 residues coordinate Mg(2+): aspartate 7, glutamate 68, and aspartate 141.

It belongs to the RuvC family. In terms of assembly, homodimer which binds Holliday junction (HJ) DNA. The HJ becomes 2-fold symmetrical on binding to RuvC with unstacked arms; it has a different conformation from HJ DNA in complex with RuvA. In the full resolvosome a probable DNA-RuvA(4)-RuvB(12)-RuvC(2) complex forms which resolves the HJ. Requires Mg(2+) as cofactor.

It is found in the cytoplasm. It catalyses the reaction Endonucleolytic cleavage at a junction such as a reciprocal single-stranded crossover between two homologous DNA duplexes (Holliday junction).. Its function is as follows. The RuvA-RuvB-RuvC complex processes Holliday junction (HJ) DNA during genetic recombination and DNA repair. Endonuclease that resolves HJ intermediates. Cleaves cruciform DNA by making single-stranded nicks across the HJ at symmetrical positions within the homologous arms, yielding a 5'-phosphate and a 3'-hydroxyl group; requires a central core of homology in the junction. The consensus cleavage sequence is 5'-(A/T)TT(C/G)-3'. Cleavage occurs on the 3'-side of the TT dinucleotide at the point of strand exchange. HJ branch migration catalyzed by RuvA-RuvB allows RuvC to scan DNA until it finds its consensus sequence, where it cleaves and resolves the cruciform DNA. The chain is Crossover junction endodeoxyribonuclease RuvC from Chlorobium phaeovibrioides (strain DSM 265 / 1930) (Prosthecochloris vibrioformis (strain DSM 265)).